The primary structure comprises 444 residues: Ribosome biogenesis protein WDR12 homolog (444 aa).

The interval 7–87 is ubiquitin-like (UBL) domain; sequence VLVKFVTKLP…ESTLEVEYVP (81 aa). Residues 91 to 123 are disordered; the sequence is PPQQKNSTPHDDWVSSVDGSRCAPASSSGGSPS. WD repeat units follow at residues 105-148, 150-191, and 203-242; these read SSVD…VASV, AHAG…EEDA, and GHED…RWAA. Positions 243 to 264 are disordered; the sequence is GTAEASKKKRKTGTANGSAAAG. WD repeat units follow at residues 272-310, 312-352, 360-400, and 403-444; these read GHLH…AADT, NGSK…GSDA, AHGG…PLGM, and HHTD…YIVS.

It belongs to the WD repeat WDR12/YTM1 family.

The protein resides in the nucleus. The protein localises to the nucleolus. Its subcellular location is the nucleoplasm. Required for maturation of ribosomal RNAs and formation of the large ribosomal subunit. In Chlamydomonas reinhardtii (Chlamydomonas smithii), this protein is Ribosome biogenesis protein WDR12 homolog.